The chain runs to 277 residues: MKKYRKILAMLAVLAIVLVLSGCSNTPITDKSTGFWDGLIILNFSRAIIWLSNLFGHSYGLGIIVFTLIIRIIILPLMIFQTRNMVAMQEVQPQMKALQKKYSSRDMETQQKLQAEMKKLYAKHGVHPMASMLPLLVQLPILIALYQAIWRTQALKTGSFLWLQLGSKDPYYVLPILAAIFTFASSWLAMKSQPEQNGMTTSMTYLMPVIILITAINVPSALSLYWVISNAFQVGQTLLLQNPFKINREREAKKQAERDRKRTLEKARKRAIRNHKR.

An N-terminal signal peptide occupies residues Met1 to Gly22. A lipid anchor (N-palmitoyl cysteine) is attached at Cys23. Cys23 carries S-diacylglycerol cysteine lipidation. Transmembrane regions (helical) follow at residues Phe35–Phe55, Gly60–Phe80, Ala130–Trp150, Pro170–Met190, and Pro208–Ile228. The span at Glu251–Lys266 shows a compositional bias: basic and acidic residues. The disordered stretch occupies residues Glu251 to Arg277. The segment covering Ala267–Arg277 has biased composition (basic residues).

This sequence belongs to the OXA1/ALB3/YidC family. Type 2 subfamily.

Its subcellular location is the cell membrane. In terms of biological role, required for the insertion and/or proper folding and/or complex formation of integral membrane proteins into the membrane. Involved in integration of membrane proteins that insert both dependently and independently of the Sec translocase complex, as well as at least some lipoproteins. The chain is Membrane protein insertase YidC 2 from Lactiplantibacillus plantarum (strain ATCC BAA-793 / NCIMB 8826 / WCFS1) (Lactobacillus plantarum).